A 457-amino-acid chain; its full sequence is Choline kinase alpha (457 aa).

The segment at 1–86 (MKTKFCTGGE…PPADEQPEPR (86 aa)) is disordered. A compositionally biased stretch (low complexity) spans 13 to 32 (PSPLGLLLSCGSGSAAPAPG). Over residues 55 to 80 (LALPPPPPLPLPLPLPQPPPPQPPAD) the composition is skewed to pro residues. ATP is bound by residues 117-123 (RGGLSNM), R146, and 207-213 (QFIPSRR). 119–121 (GLS) is a binding site for phosphocholine. Residue K247 is modified to N6-acetyllysine. Phosphoserine is present on S279. 2 residues coordinate ATP: Q308 and D330.

It belongs to the choline/ethanolamine kinase family. As to quaternary structure, homodimer. Heterodimer with CHKB. In terms of assembly, monomer; acetylation by KAT5 promotes dissociation of the homodimer and monomerization. (Microbial infection) Interacts with PI4KA/PI4KIIIalpha; CHKA bridges PI4KA/PI4KIIIalpha and hepatitis C virus (HCV) non-structural protein 5A (NS5A) and potentiates NS5A-stimulated PI4KA activity, which then facilitates the targeting of the ternary complex to the ER for viral replication. Post-translationally, phosphorylated at Ser-279 by AMPK in response to glucose deprivation, leading to localization to lipid droplets. Acetylated by KAT5 at Lys-247 following phosphorylation by AMPK, leading to monomerization and conversion into a tyrosine-protein kinase.

It is found in the cytoplasm. The protein localises to the cytosol. The protein resides in the lipid droplet. It carries out the reaction choline + ATP = phosphocholine + ADP + H(+). It catalyses the reaction ethanolamine + ATP = phosphoethanolamine + ADP + H(+). The enzyme catalyses L-tyrosyl-[protein] + ATP = O-phospho-L-tyrosyl-[protein] + ADP + H(+). It participates in phospholipid metabolism; phosphatidylcholine biosynthesis; phosphocholine from choline: step 1/1. It functions in the pathway phospholipid metabolism; phosphatidylethanolamine biosynthesis; phosphatidylethanolamine from ethanolamine: step 1/3. Homodimerization or heterodimerization is required for the choline and ethanolamine kinase activities. In terms of biological role, plays a key role in phospholipid biosynthesis by catalyzing the phosphorylation of free choline to phosphocholine, the first step in phosphatidylcholine biosynthesis. Also phosphorylates ethanolamine, thereby contributing to phosphatidylethanolamine biosynthesis. Has higher activity with choline. May contribute to tumor cell growth. Its function is as follows. This isoform plays a key role in lipolysis of lipid droplets following glucose deprivation. In response to glucose deprivation, phosphorylated by AMPK, promoting localization to lipid droplets. Phosphorylation is followed by acetylation by KAT5, leading to dissociation of the homodimer into a monomer. Monomeric CHKA isoform 1 is converted into a tyrosine-protein kinase, which phosphorylates lipid droplet structural proteins PLIN2 and PLIN3, leading to lipolysis of lipid droplets. The polypeptide is Choline kinase alpha (CHKA) (Homo sapiens (Human)).